We begin with the raw amino-acid sequence, 109 residues long: Thioredoxin-like protein slr1139 (109 aa).

The region spanning 2-107 is the Thioredoxin domain; it reads SLLEITDAEF…LLELLKEELD (106 aa). Cys31 and Cys34 are disulfide-bonded.

This sequence belongs to the thioredoxin family.

This Synechocystis sp. (strain ATCC 27184 / PCC 6803 / Kazusa) protein is Thioredoxin-like protein slr1139.